The chain runs to 1176 residues: Chromosome partition protein Smc (1176 aa).

Position 32-39 (32-39 (PNGCGKSN)) interacts with ATP. Residues 169–506 (GVSRYKERRR…VKLQEDVQKQ (338 aa)) are a coiled coil. The 103-residue stretch at 521-623 (LGRLWQKLHI…TAPDLGQALA (103 aa)) folds into the SMC hinge domain. 2 coiled-coil regions span residues 653 to 947 (DSEQ…LAAM) and 987 to 1024 (ERKE…LQAT).

The protein belongs to the SMC family. Homodimer.

The protein localises to the cytoplasm. In terms of biological role, required for chromosome condensation and partitioning. The sequence is that of Chromosome partition protein Smc from Bordetella petrii (strain ATCC BAA-461 / DSM 12804 / CCUG 43448).